The following is a 251-amino-acid chain: Hydroxyacylglutathione hydrolase (251 aa).

His-53, His-55, Asp-57, His-58, His-110, Asp-127, and His-165 together coordinate Zn(2+).

It belongs to the metallo-beta-lactamase superfamily. Glyoxalase II family. Monomer. Requires Zn(2+) as cofactor.

The catalysed reaction is an S-(2-hydroxyacyl)glutathione + H2O = a 2-hydroxy carboxylate + glutathione + H(+). Its pathway is secondary metabolite metabolism; methylglyoxal degradation; (R)-lactate from methylglyoxal: step 2/2. Thiolesterase that catalyzes the hydrolysis of S-D-lactoyl-glutathione to form glutathione and D-lactic acid. In Shigella boydii serotype 4 (strain Sb227), this protein is Hydroxyacylglutathione hydrolase.